The primary structure comprises 168 residues: Ribosome maturation factor RimM (168 aa).

The region spanning 97-168 is the PRC barrel domain; the sequence is PNEYYYYELL…RLVVKVPEWI (72 aa).

The protein belongs to the RimM family. As to quaternary structure, binds ribosomal protein uS19.

It localises to the cytoplasm. Its function is as follows. An accessory protein needed during the final step in the assembly of 30S ribosomal subunit, possibly for assembly of the head region. Essential for efficient processing of 16S rRNA. May be needed both before and after RbfA during the maturation of 16S rRNA. It has affinity for free ribosomal 30S subunits but not for 70S ribosomes. The chain is Ribosome maturation factor RimM from Pseudothermotoga lettingae (strain ATCC BAA-301 / DSM 14385 / NBRC 107922 / TMO) (Thermotoga lettingae).